The chain runs to 37 residues: Large ribosomal subunit protein bL36c (37 aa).

It belongs to the bacterial ribosomal protein bL36 family.

It localises to the plastid. The protein localises to the chloroplast. This Cryptomeria japonica (Japanese cedar) protein is Large ribosomal subunit protein bL36c.